The sequence spans 339 residues: uncharacterized protein (339 aa).

His17, His19, His197, and Asp278 together coordinate Zn(2+). Substrate is bound at residue Asp279.

This sequence belongs to the metallo-dependent hydrolases superfamily. Adenosine and AMP deaminases family. Adenine deaminase type 2 subfamily. The cofactor is Zn(2+).

The protein resides in the cytoplasm. It is found in the nucleus. This is an uncharacterized protein from Schizosaccharomyces pombe (strain 972 / ATCC 24843) (Fission yeast).